The chain runs to 201 residues: Cytochrome c biogenesis ATP-binding export protein CcmA (201 aa).

The region spanning 3 to 200 (LIAENLGGER…EGAELRMGVA (198 aa)) is the ABC transporter domain. 35 to 42 (GPNGSGKS) contributes to the ATP binding site.

The protein belongs to the ABC transporter superfamily. CcmA exporter (TC 3.A.1.107) family. The complex is composed of two ATP-binding proteins (CcmA) and two transmembrane proteins (CcmB).

It localises to the cell inner membrane. It carries out the reaction heme b(in) + ATP + H2O = heme b(out) + ADP + phosphate + H(+). Functionally, part of the ABC transporter complex CcmAB involved in the biogenesis of c-type cytochromes; once thought to export heme, this seems not to be the case, but its exact role is uncertain. Responsible for energy coupling to the transport system. The polypeptide is Cytochrome c biogenesis ATP-binding export protein CcmA (Mesorhizobium japonicum (strain LMG 29417 / CECT 9101 / MAFF 303099) (Mesorhizobium loti (strain MAFF 303099))).